Here is a 473-residue protein sequence, read N- to C-terminus: Photosystem II CP43 reaction center protein (473 aa).

Positions methionine 1–glutamate 14 are excised as a propeptide. An N-acetylthreonine modification is found at threonine 15. Threonine 15 is modified (phosphothreonine). Transmembrane regions (helical) follow at residues leucine 69 to alanine 93, leucine 134 to asparagine 155, lysine 178 to threonine 200, lysine 255 to serine 275, and tryptophan 291 to alanine 312. Glutamate 367 is a binding site for [CaMn4O5] cluster. A helical membrane pass occupies residues arginine 447–proline 471.

The protein belongs to the PsbB/PsbC family. PsbC subfamily. As to quaternary structure, PSII is composed of 1 copy each of membrane proteins PsbA, PsbB, PsbC, PsbD, PsbE, PsbF, PsbH, PsbI, PsbJ, PsbK, PsbL, PsbM, PsbT, PsbX, PsbY, PsbZ, Psb30/Ycf12, at least 3 peripheral proteins of the oxygen-evolving complex and a large number of cofactors. It forms dimeric complexes. It depends on Binds multiple chlorophylls and provides some of the ligands for the Ca-4Mn-5O cluster of the oxygen-evolving complex. It may also provide a ligand for a Cl- that is required for oxygen evolution. PSII binds additional chlorophylls, carotenoids and specific lipids. as a cofactor.

The protein localises to the plastid. It localises to the chloroplast thylakoid membrane. Its function is as follows. One of the components of the core complex of photosystem II (PSII). It binds chlorophyll and helps catalyze the primary light-induced photochemical processes of PSII. PSII is a light-driven water:plastoquinone oxidoreductase, using light energy to abstract electrons from H(2)O, generating O(2) and a proton gradient subsequently used for ATP formation. This chain is Photosystem II CP43 reaction center protein, found in Dioscorea elephantipes (Elephant's foot yam).